Reading from the N-terminus, the 272-residue chain is Sulfate transporter CysZ (272 aa).

A run of 4 helical transmembrane segments spans residues 29-49, 66-86, 148-168, and 219-239; these read FVII…WLFI, WLSF…LLLF, IIAL…VPVL, and FVPV…TLMW.

It belongs to the CysZ family.

Its subcellular location is the cell inner membrane. Functionally, high affinity, high specificity proton-dependent sulfate transporter, which mediates sulfate uptake. Provides the sulfur source for the cysteine synthesis pathway. In Haemophilus influenzae (strain 86-028NP), this protein is Sulfate transporter CysZ.